The primary structure comprises 502 residues: Maturase K (502 aa).

This sequence belongs to the intron maturase 2 family. MatK subfamily.

The protein localises to the plastid. It localises to the chloroplast. In terms of biological role, usually encoded in the trnK tRNA gene intron. Probably assists in splicing its own and other chloroplast group II introns. The polypeptide is Maturase K (Arabis blepharophylla (Coast rock-cress)).